Here is a 601-residue protein sequence, read N- to C-terminus: NAD(+)--arginine ADP-ribosyltransferase Chelt (601 aa).

A signal peptide spans 1 to 18 (MKTIISLIFIMFPLFVSA). Residues 26–43 (ADSR…LYPR) and Glu-130 contribute to the NAD(+) site. Glu-130 is an active-site residue. An intrachain disulfide couples Cys-205 to Cys-220.

Belongs to the enterotoxin A family.

It localises to the secreted. The enzyme catalyses L-arginyl-[protein] + NAD(+) = N(omega)-(ADP-D-ribosyl)-L-arginyl-[protein] + nicotinamide + H(+). In terms of biological role, a probable mono(ADP-ribosyl)transferase, it may ADP-ribosylate Arg in target protein(s). Upon expression in yeast cells causes cell death. This chain is NAD(+)--arginine ADP-ribosyltransferase Chelt, found in Vibrio cholerae.